A 637-amino-acid polypeptide reads, in one-letter code: MNANPKFLAATAEVDAAAVAPLPKSRKIYETGSRPDIRVPFREIEQQDTPTMFGGERNPPLTVYDTSGPYTDPQAHIDIRRGLPELRRAWIEERGDVELLAGPTSDYGRARLQDPQLTAMRFDLRRPPRRAKDGANVTQMHYARRGIVTPEMEYVAIRESLRREHYIESLRASGPEGEKMARRLLRQHPGQSFGAAIPAAITPEFVRDEIARGRAIIPANINHPEVEPMIIGRNFLVKINANIGNSAVSSGIGEEVEKMTWAIRWGGDTVMDLSTGKHIHETREWIIRNSPVPIGTVPIYQALEKVDGKAEALTWEIFRDTLIEQAEQGVDYFTIHAGVRLPFIPMTADRMTGIVSRGGSIMAKWCLAHHKESFLYERFEEICEIMKAYDVSFSLGDGLRPGSGYDANDEAQFAELKTLGELTQVAWKHDVQVMIEGPGHVPMQMIKENMELQLEHCHEAPFYTLGPLTTDIAPGYDHITSGIGAALIGWYGTAMLCYVTPKEHLGLPNKKDVKDGIITYKIAAHAADLAKGHPGAAVRDNALSKARFEFRWDDQFNLGLDPDTAKEFHDETLPKDSMKVAHFCSMCGPHFCSMKITQDVREYAASQGVSAQQALTQGMQEKAIEFVKKGAEVYHRS.

Residues Asn-242, Met-271, Tyr-300, His-336, 356–358, 397–400, and Glu-436 each bind substrate; these read SRG and DGLR. His-440 is a Zn(2+) binding site. Tyr-463 contributes to the substrate binding site. Residue His-504 coordinates Zn(2+). [4Fe-4S] cluster-binding residues include Cys-584, Cys-587, and Cys-592.

Belongs to the ThiC family. In terms of assembly, homodimer. Requires [4Fe-4S] cluster as cofactor.

The enzyme catalyses 5-amino-1-(5-phospho-beta-D-ribosyl)imidazole + S-adenosyl-L-methionine = 4-amino-2-methyl-5-(phosphooxymethyl)pyrimidine + CO + 5'-deoxyadenosine + formate + L-methionine + 3 H(+). The protein operates within cofactor biosynthesis; thiamine diphosphate biosynthesis. Its function is as follows. Catalyzes the synthesis of the hydroxymethylpyrimidine phosphate (HMP-P) moiety of thiamine from aminoimidazole ribotide (AIR) in a radical S-adenosyl-L-methionine (SAM)-dependent reaction. This Bordetella avium (strain 197N) protein is Phosphomethylpyrimidine synthase.